A 464-amino-acid polypeptide reads, in one-letter code: Argininosuccinate lyase 2 (464 aa).

Belongs to the lyase 1 family. Argininosuccinate lyase subfamily.

The protein localises to the cytoplasm. It carries out the reaction 2-(N(omega)-L-arginino)succinate = fumarate + L-arginine. It functions in the pathway amino-acid biosynthesis; L-arginine biosynthesis; L-arginine from L-ornithine and carbamoyl phosphate: step 3/3. The chain is Argininosuccinate lyase 2 from Pseudomonas fluorescens (strain Pf0-1).